A 140-amino-acid chain; its full sequence is Nucleoside diphosphate kinase (140 aa).

Residues Lys-11, Phe-59, Arg-87, Thr-93, Arg-104, and Asn-114 each coordinate ATP. Catalysis depends on His-117, which acts as the Pros-phosphohistidine intermediate.

This sequence belongs to the NDK family. Homotetramer. The cofactor is Mg(2+).

It is found in the cytoplasm. The catalysed reaction is a 2'-deoxyribonucleoside 5'-diphosphate + ATP = a 2'-deoxyribonucleoside 5'-triphosphate + ADP. It carries out the reaction a ribonucleoside 5'-diphosphate + ATP = a ribonucleoside 5'-triphosphate + ADP. Functionally, major role in the synthesis of nucleoside triphosphates other than ATP. The ATP gamma phosphate is transferred to the NDP beta phosphate via a ping-pong mechanism, using a phosphorylated active-site intermediate. In Acidiphilium cryptum (strain JF-5), this protein is Nucleoside diphosphate kinase.